The chain runs to 1384 residues: Contactin-associated protein 1 (1384 aa).

An N-terminal signal peptide occupies residues 1 to 19; sequence MMHLRLFCILLAAVSGAEG. The Extracellular portion of the chain corresponds to 20 to 1283; sequence WGYYGCDEEL…PYYHDEGWVA (1264 aa). The F5/8 type C domain occupies 25 to 168; it reads CDEELVGPLY…IGLRLGLYGC (144 aa). The cysteines at positions 25 and 168 are disulfide-linked. 3 N-linked (GlcNAc...) asparagine glycosylation sites follow: N120, N128, and N276. 2 consecutive Laminin G-like domains span residues 203–355 and 389–538; these read FKTE…AFRC and FRTW…FDTC. Cysteines 323 and 355 form a disulfide. N420, N499, and N518 each carry an N-linked (GlcNAc...) asparagine glycan. Cystine bridges form between C506/C538, C544/C555, C549/C564, and C566/C576. The EGF-like 1 domain maps to 540-577; that stretch reads ITDRCSPNMCEHDGRCYQSWDDFICYCELTGYKGETCH. The Fibrinogen C-terminal domain maps to 576–795; sequence CHTPLYKESC…NTISFHTGAA (220 aa). N597, N653, N664, N763, N804, N843, N860, N948, and N956 each carry an N-linked (GlcNAc...) asparagine glycan. A Laminin G-like 3 domain is found at 813–956; that stretch reads FRTSAPSGVF…ANASEGTSPN (144 aa). 4 disulfides stabilise this stretch: C930–C957, C961–C974, C968–C983, and C985–C995. The EGF-like 2 domain maps to 957 to 996; it reads CTGHCAHPRLPCFHGGRCVERYSYYTCDCDLTAFDGPYCN. N1078 and N1147 each carry an N-linked (GlcNAc...) asparagine glycan. A Laminin G-like 4 domain is found at 1088 to 1250; it reads FSTSSAPAVL…VQGELSESNC (163 aa). A disulfide bond links C1209 and C1250. A helical membrane pass occupies residues 1284–1304; sequence ILLGFLVAFLLLGLVGMLVLF. Residues 1305 to 1384 are Cytoplasmic-facing; it reads YLQNHRYKGS…PQILEESRSE (80 aa). The segment covering 1319-1328 has biased composition (basic and acidic residues); it reads EPKAAHEYHP. The disordered stretch occupies residues 1319 to 1384; it reads EPKAAHEYHP…PQILEESRSE (66 aa). An SH3-binding motif is present at residues 1328 to 1369; sequence PGSKPPLPTSGPAQVPTPTAAPNQAPASAPAPAPTPAPAPGP. A compositionally biased stretch (low complexity) spans 1339-1355; that stretch reads PAQVPTPTAAPNQAPAS. Residues 1356–1368 show a composition bias toward pro residues; the sequence is APAPAPTPAPAPG. S1383 carries the phosphoserine modification.

This sequence belongs to the neurexin family. Interacts with CNTN1/contactin in cis form. In terms of tissue distribution, predominantly expressed in brain. Weak expression detected in ovary, pancreas, colon, lung, heart, intestine and testis.

The protein localises to the membrane. It is found in the cell junction. It localises to the paranodal septate junction. Its function is as follows. Required, with CNTNAP2, for radial and longitudinal organization of myelinated axons. Plays a role in the formation of functional distinct domains critical for saltatory conduction of nerve impulses in myelinated nerve fibers. Demarcates the paranodal region of the axo-glial junction. In association with contactin involved in the signaling between axons and myelinating glial cells. In Homo sapiens (Human), this protein is Contactin-associated protein 1 (CNTNAP1).